The chain runs to 328 residues: Peroxidase 71 (328 aa).

An N-terminal signal peptide occupies residues 1–23; the sequence is MGLVRSLCLLITFLNCLIISVHG. Cystine bridges form between C44-C120, C77-C82, C126-C324, and C204-C235. Residue H75 is the Proton acceptor of the active site. Positions 76, 79, 81, 83, and 85 each coordinate Ca(2+). P167 lines the substrate pocket. H197 serves as a coordination point for heme b. T198 provides a ligand contact to Ca(2+). N213 carries an N-linked (GlcNAc...) asparagine glycan. Residues D248, S251, and D256 each coordinate Ca(2+). N262 is a glycosylation site (N-linked (GlcNAc...) asparagine).

This sequence belongs to the peroxidase family. Classical plant (class III) peroxidase subfamily. Heme b is required as a cofactor. It depends on Ca(2+) as a cofactor. Slightly expressed in roots.

The protein resides in the secreted. It catalyses the reaction 2 a phenolic donor + H2O2 = 2 a phenolic radical donor + 2 H2O. Removal of H(2)O(2), oxidation of toxic reductants, biosynthesis and degradation of lignin, suberization, auxin catabolism, response to environmental stresses such as wounding, pathogen attack and oxidative stress. These functions might be dependent on each isozyme/isoform in each plant tissue. This Arabidopsis thaliana (Mouse-ear cress) protein is Peroxidase 71 (PER71).